The chain runs to 403 residues: Ribosomal RNA large subunit methyltransferase I (403 aa).

One can recognise a PUA domain in the interval 9-88 (YPRLILSKGR…ESIDIAFFTR (80 aa)).

Belongs to the methyltransferase superfamily. RlmI family.

It localises to the cytoplasm. It catalyses the reaction cytidine(1962) in 23S rRNA + S-adenosyl-L-methionine = 5-methylcytidine(1962) in 23S rRNA + S-adenosyl-L-homocysteine + H(+). Its function is as follows. Specifically methylates the cytosine at position 1962 (m5C1962) of 23S rRNA. This Salmonella paratyphi C (strain RKS4594) protein is Ribosomal RNA large subunit methyltransferase I.